We begin with the raw amino-acid sequence, 505 residues long: N-succinylglutamate 5-semialdehyde dehydrogenase (505 aa).

Residue 234 to 239 participates in NAD(+) binding; that stretch reads GSAHTG. Active-site residues include glutamate 257 and cysteine 291.

The protein belongs to the aldehyde dehydrogenase family. AstD subfamily.

It carries out the reaction N-succinyl-L-glutamate 5-semialdehyde + NAD(+) + H2O = N-succinyl-L-glutamate + NADH + 2 H(+). The protein operates within amino-acid degradation; L-arginine degradation via AST pathway; L-glutamate and succinate from L-arginine: step 4/5. In terms of biological role, catalyzes the NAD-dependent reduction of succinylglutamate semialdehyde into succinylglutamate. In Yersinia pestis (strain Pestoides F), this protein is N-succinylglutamate 5-semialdehyde dehydrogenase.